The chain runs to 1602 residues: MVQKKFCPRLLDYLVIVGARHPSSDSVAQTPELLRRYPLEDHPEFPLPPDVVFFCQPEGCLSVRQRRMSLRDDTSFVFTLTDKDTGVTRYGICVNFYRSFQKRMPKEKAEGGAGPRGKEGAHAPCASEEAATESSESGSTLQPPSADSTPDVNQSPRGKRRAKAGNRSRNSTLTSLCVLSHYPFFSTFRECLYTLKRLVDCCSERLLGKKPGIPRGVQRDTMWRIFTGSLLVEEKSSALLHDLREIEAWIYRLLRSPVPVSGQKRVDIEVLPQEVQQALTFALPDPSRFTLVDFPLHLPLELLGVDACLQVLTCILLEHKVVLQSRDYNALSMSVMAFVAMIYPLEYMFPVIPLLPTCMASAEQLLLAPTPYIIGVPASFFLYKLDFKMPDDVWLVDLDSNRVIAPTNAEVLPILPEPESLELKKHLKQALASMSLNTQPILNLEKFHEGQETPLLLGRFSNDLQSTPSTEFNPLIYGNDVDSVDVATRVAMVRFFNSANVLQGFQMHTRTLRLFPRPVVAFQAGSFLASRPRQTPFAEKLARTQAVEYFGEWILNPSNYAFQRIHNNTFDPALIGDKPKWYAHQLQPIHYRVYDSNSQLAEALSVPPERDSESDPTDDSGSDSMDYDDSSSSYSSLGDFVSEMMKCDINGDTPNVDPLTHAALGDASEVEIDELQPQKEGEEPGPDSENSQENLPLRSSSSTTASSSPSTIVHGAHSEPADSTEVGDKAATGISKPLPPVPPSICKSTVDRRQTETGEGSVCQRTYDHPYFEPQYGSPAEEDDDEQGESYTPRFSQHASGSRAQKLLRPNSLKLASDSDAESDSRASSPNSTVSNNSTEGFGGIMSFASSLYRNHSTSFSLSNLTLPTKGAREKTTPFPSLKGNRRALVDQKSSVIKHSPTVKREPPSPQGRSSNSSENQQFLKEVVHSVLDGQGVGWLNMKKVRRLLESEQLRVFVLSKLSRAVQSEDDARQDVIQDVEISRKVYKGMLDLLKCTVLSLEQSYAHAGLGGMASIFGLLEIAQTHYYSKEPDKRKRSPTENVNTPVGKDPGLAGRGDPKAMAQLRVPQLGPRAPSATGRGPKELDTRSLKEENFVASVGPEVIKPVFDLGETEEKKSQISADSGVSLASASQRTDQDSVIGVSPAVMIRSSSQDSEVSNSSGETLGADSDLSSNAGDGPGGEGSAHLASSRATLSDSEIETNSATSTIFGKAHSLKPKEKPASSPVRSSEDVSQRVYLYEGLLGRDKGSMWDQLEDAAMETFSISKERSTLWDQMQFWEDAFLDAVMLEREGMGMDQGPQEMIDRYLSLGEHDRKRLEDDEDRLLATLLHNLISYMLLMKVNKNDIRKKVRRLMGKSHVGLVYSQQINEVLDQLTNLNGRDLSIRSSGSRHMKKQTFVVHAGTDTNGDIFFMEVCDDCVVLRSNIGTVYERWWYEKLINMTYCPKTKVLCLWRRNGSETQLNKFYTKKCRELYYCVKDSMERAAARQQSIKPGPELGGEFPVQDMKTGEGGLLQVTLEGINLKFMHNQVFIELNHIKKCNTVRGVFVLEEFVPEIKEVVSHKYKTPMAHEICYSVLCLFSYVAAVRSSEEDLRTPPRPVSS.

A uDENN domain is found at 13–267; sequence YLVIVGARHP…VPVSGQKRVD (255 aa). Positions 105-121 are enriched in basic and acidic residues; that stretch reads PKEKAEGGAGPRGKEGA. Residues 105 to 167 are disordered; the sequence is PKEKAEGGAG…GKRRAKAGNR (63 aa). Positions 126–137 are enriched in low complexity; sequence ASEEAATESSES. Positions 138–156 are enriched in polar residues; that stretch reads GSTLQPPSADSTPDVNQSP. Residue Ser-155 is modified to Phosphoserine. The segment covering 157–166 has biased composition (basic residues); sequence RGKRRAKAGN. The cDENN domain maps to 288–428; that stretch reads RFTLVDFPLH…ESLELKKHLK (141 aa). Positions 430-564 constitute a dDENN domain; that stretch reads ALASMSLNTQ…LNPSNYAFQR (135 aa). 2 disordered regions span residues 603–635 and 676–840; these read ALSVPPERDSESDPTDDSGSDSMDYDDSSSSYS and QPQK…NSTE. The span at 614-629 shows a compositional bias: acidic residues; that stretch reads SDPTDDSGSDSMDYDD. 2 positions are modified to phosphoserine: Ser-688 and Ser-691. Residues 688–698 are compositionally biased toward polar residues; sequence SENSQENLPLR. Residues 699-711 show a composition bias toward low complexity; it reads SSSSTTASSSPST. Phosphoserine is present on Ser-778. Polar residues predominate over residues 789-803; the sequence is ESYTPRFSQHASGSR. Residues Ser-812, Ser-817, and Ser-819 each carry the phosphoserine modification. Low complexity predominate over residues 826–839; sequence RASSPNSTVSNNST. A phosphoserine mark is found at Ser-857, Ser-861, Ser-895, Ser-900, and Ser-909. Disordered regions lie at residues 870-920, 1030-1089, and 1113-1231; these read KGAR…SSEN, KEPD…DTRS, and TEEK…RSSE. The segment covering 911 to 920 has biased composition (polar residues); that stretch reads QGRSSNSSEN. At Ser-1038 the chain carries Phosphoserine. Phosphothreonine occurs at positions 1040 and 1045. Ser-1089 is modified (phosphoserine). Positions 1119–1134 are enriched in polar residues; the sequence is QISADSGVSLASASQR. A compositionally biased stretch (low complexity) spans 1151 to 1162; it reads SSSQDSEVSNSS. Residues 1191–1209 show a composition bias toward polar residues; that stretch reads SRATLSDSEIETNSATSTI. Thr-1194 carries the phosphothreonine modification. Phosphoserine occurs at positions 1196 and 1225. Positions 1295–1370 constitute a Death domain; that stretch reads GMDQGPQEMI…GLVYSQQINE (76 aa).

This sequence belongs to the MADD family. Interacts (via death domain) with TNFRSF1A (via death domain). Interacts with PIDD1. Interacts with YWHAZ. Interacts (via death domain) with KIF1B; links the motor KIF1B to Rab3-carrying vesicles in anterograde synaptic vesicle transport. Interacts with KIF1A. Interacts (via uDENN domain) with RAB3A, RAB3B, RAB3C and RAB3D; the GTP-bound form of the Rab proteins is preferred for interaction. As to expression, expressed in all tissues examined with the highest expression in brain.

The protein localises to the cell membrane. Its subcellular location is the cytoplasm. It localises to the cell projection. The protein resides in the axon. In terms of biological role, guanyl-nucleotide exchange factor that regulates small GTPases of the Rab family. Converts GDP-bound inactive form of RAB27A and RAB27B to the GTP-bound active forms. Converts GDP-bound inactive form of RAB3A, RAB3C and RAB3D to the GTP-bound active forms, GTPases involved in synaptic vesicle exocytosis and vesicle secretion. Plays a role in synaptic vesicle formation and in vesicle trafficking at the neuromuscular junction. Involved in up-regulating a post-docking step of synaptic exocytosis in central synapses. Probably by binding to the motor proteins KIF1B and KIF1A, mediates motor-dependent transport of GTP-RAB3A-positive vesicles to the presynaptic nerve terminals. Plays a role in TNFA-mediated activation of the MAPK pathway, including ERK1/2. May link TNFRSF1A with MAP kinase activation. May be involved in the regulation of TNFA-induced apoptosis. The polypeptide is MAP kinase-activating death domain protein (Rattus norvegicus (Rat)).